A 394-amino-acid chain; its full sequence is RAB6A-GEF complex partner protein 2 (394 aa).

This sequence belongs to the RGP1 family. In terms of assembly, forms a complex with RIC1; the interaction enhances RAB6A GTPase activity. Interacts with RIC1. Interacts with RAB6A; the interaction is direct with a preference for RAB6A-GDP. Interacts with RAB33B.

The protein localises to the cytoplasm. The protein resides in the cytosol. It is found in the membrane. Functionally, the RIC1-RGP1 complex acts as a guanine nucleotide exchange factor (GEF), which activates RAB6A by exchanging bound GDP for free GTP and may thereby required for efficient fusion of endosome-derived vesicles with the Golgi compartment. The RIC1-RGP1 complex participates in the recycling of mannose-6-phosphate receptors. The polypeptide is RAB6A-GEF complex partner protein 2 (Bos taurus (Bovine)).